The chain runs to 394 residues: MLGRSLLTWVLAAAVTCAQAQQVPPWTEDCRKSTYPPSGPTYRGPVPWYTINLDLPPYKRWHELLAHKAPVLRTLVNSISNLVNAFVPSGKIMQMVDEKLPGLIGSIPGPFGEEMRGIADVTGIPLGEIISFNIFYELFTMCTSIITEDGKGHLLHGRNMDFGIFLGWNINNNTWVVTEELKPLTVNLDFQRNNKTVFKATSFAGYVGMLTGFKPGLLSLTLNERFSLNGGYLGILEWMFGKKNAQWVGFITRSVLENSTSYEEAKNILTKTKITAPAYFILGGNQSGEGCVITRERKESLDVYELDPKHGRWYVVQTNYDRWKNTLFLDDRRTPAKKCLNHTTQKNLSFATIYDVLSTKPVLNKLTVFTTLIDVTKDQFESHLRDCPDPCIGW.

The first 20 residues, 1-20, serve as a signal peptide directing secretion; that stretch reads MLGRSLLTWVLAAAVTCAQA. A disulfide bridge links C30 with C339. Residue C142 is the Nucleophile of the active site. N-linked (GlcNAc...) asparagine glycans are attached at residues N194, N258, N285, and N341. An intrachain disulfide couples C387 to C391.

Belongs to the acid ceramidase family. As to quaternary structure, heterodimer; disulfide-linked. The heterodimer is composed of the disulfide-linked alpha and beta chains produced by autocatalytic cleavage of the precursor. In terms of processing, N-glycosylated. Post-translationally, proteolytically cleaved into two chains alpha and beta that remain associated via a disulfide bond. Cleavage gives rise to a conformation change that activates the enzyme. The same catalytic Cys residue mediates the autoproteolytic cleavage and subsequent hydrolysis of lipid substrates. The beta chain may undergo an additional C-terminal processing.

The protein resides in the lysosome. The protein localises to the secreted. The catalysed reaction is an N-acylsphing-4-enine + H2O = sphing-4-enine + a fatty acid. It carries out the reaction N-dodecanoylsphing-4-enine + H2O = dodecanoate + sphing-4-enine. It catalyses the reaction N-tetradecanoylsphing-4-enine + H2O = tetradecanoate + sphing-4-enine. The enzyme catalyses N-hexadecanoylsphing-4-enine + H2O = sphing-4-enine + hexadecanoate. The catalysed reaction is N-octadecanoylsphing-4-enine + H2O = sphing-4-enine + octadecanoate. It carries out the reaction N-dodecanoyl-(4R)-hydroxysphinganine + H2O = (4R)-hydroxysphinganine + dodecanoate. It catalyses the reaction N-(dodecanoyl)-sphinganine + H2O = dodecanoate + sphinganine. The enzyme catalyses N-(acetyl)-sphing-4-enine + H2O = sphing-4-enine + acetate. The catalysed reaction is N-(hexanoyl)sphing-4-enine + H2O = hexanoate + sphing-4-enine. It carries out the reaction N-octanoylsphing-4-enine + H2O = octanoate + sphing-4-enine. It catalyses the reaction N-(9Z-octadecenoyl)-sphing-4-enine + H2O = sphing-4-enine + (9Z)-octadecenoate. The enzyme catalyses N-dodecanoylethanolamine + H2O = dodecanoate + ethanolamine. The protein operates within lipid metabolism; sphingolipid metabolism. In terms of biological role, lysosomal ceramidase that hydrolyzes sphingolipid ceramides into sphingosine and free fatty acids at acidic pH. Ceramides, sphingosine, and its phosphorylated form sphingosine-1-phosphate are bioactive lipids that mediate cellular signaling pathways regulating several biological processes including cell proliferation, apoptosis and differentiation. Has a higher catalytic efficiency towards C12-ceramides versus other ceramides. Also catalyzes the reverse reaction allowing the synthesis of ceramides from fatty acids and sphingosine. For the reverse synthetic reaction, the natural sphingosine D-erythro isomer is more efficiently utilized as a substrate compared to D-erythro-dihydrosphingosine and D-erythro-phytosphingosine, while the fatty acids with chain lengths of 12 or 14 carbons are the most efficiently used. Also has an N-acylethanolamine hydrolase activity. By regulating the levels of ceramides, sphingosine and sphingosine-1-phosphate in the epidermis, mediates the calcium-induced differentiation of epidermal keratinocytes. Also indirectly regulates tumor necrosis factor/TNF-induced apoptosis. By regulating the intracellular balance between ceramides and sphingosine, in adrenocortical cells, probably also acts as a regulator of steroidogenesis. The sequence is that of Acid ceramidase from Rattus norvegicus (Rat).